The sequence spans 357 residues: Mannonate dehydratase (357 aa).

Belongs to the mannonate dehydratase family. Fe(2+) is required as a cofactor. Mn(2+) serves as cofactor.

The enzyme catalyses D-mannonate = 2-dehydro-3-deoxy-D-gluconate + H2O. Its pathway is carbohydrate metabolism; pentose and glucuronate interconversion. Its function is as follows. Catalyzes the dehydration of D-mannonate. This is Mannonate dehydratase from Enterococcus faecalis (strain ATCC 700802 / V583).